We begin with the raw amino-acid sequence, 1231 residues long: Protein FAM193A (1231 aa).

Residues 106 to 142 adopt a coiled-coil conformation; that stretch reads CTEDMYSTLLQRYQRSEEELRKVAEEWLECQKRIDAY. The interval 249 to 272 is disordered; that stretch reads DYLSEMRPPSVSSASSGSGSSSPI. A compositionally biased stretch (low complexity) spans 258 to 270; it reads SVSSASSGSGSSS. S293 bears the Phosphoserine mark. Disordered stretches follow at residues 331 to 405, 633 to 703, 719 to 789, 826 to 845, and 860 to 1174; these read NGGG…QAEQ, QSSS…APSF, SFCP…NQKE, LTKR…EREG, and NSSE…SSLD. Positions 355 to 365 are enriched in acidic residues; sequence EADDEDADGES. S648 bears the Phosphoserine mark. The span at 676 to 691 shows a compositional bias: low complexity; it reads LAPLPALSPSALSPAS. Acidic residues predominate over residues 761-773; the sequence is QQDDGDESADEDS. Over residues 776–785 the composition is skewed to low complexity; the sequence is EHSSSTSTST. The segment covering 872 to 881 has biased composition (basic residues); that stretch reads AAKRARHKQR. Residues 877–973 are a coiled coil; it reads RHKQRKLEEK…ATESISNSEN (97 aa). Positions 882-909 are enriched in basic and acidic residues; it reads KLEEKARLEAEARAREHLHHQEEQKQRE. Positions 910 to 920 are enriched in acidic residues; it reads EEEDEEEEDEE. The segment covering 921 to 935 has biased composition (basic and acidic residues); the sequence is QHFKEEFQRLQELQK. The segment covering 937 to 946 has biased composition (basic residues); that stretch reads RAAKKKKKDR. The span at 962–979 shows a compositional bias: polar residues; sequence QAATESISNSENIHNGSL. S1136 and S1151 each carry phosphoserine. Over residues 1156 to 1166 the composition is skewed to basic residues; sequence GKNKKNKKKKG.

Belongs to the FAM193 family.

This chain is Protein FAM193A (Fam193a), found in Mus musculus (Mouse).